The chain runs to 622 residues: MDRSGSSDFAGAAATTGRSNPAPWSDDKESPNNEDDSNEDDGDHTTPAKVTDPLAPKLANNERILVVSVTERTRETWGQKAEFLLAVIGFAVDLGNVWRFPYICYQNGGGAFLVPYCLFLIFGGLPLFYMELALGQFHRCGCLSIWKRICPALKGVGYAICLIDIYMGMYYNTIIGWAVYYLFASFTSKLPWTSCDNPWNTENCMQVTSENFTELATSPAKEFFERKVLESYKGNGLDFMGPVKPTLALCVFGVFVLVYFSLWKGVRSAGKVVWVTALAPYVVLIILLVRGVSLPGADEGIKYYLTPEWHKLKNSKVWIDAASQIFFSLGPGFGTLLALSSYNKFNNNCYRDALITSSINCLTSFLAGFVIFSVLGYMAYVQKTSIDKVGLEGPGLVFIVYPEAIATMSGSVFWSIIFFLMLITLGLDSTFGGLEAMITALCDEYPRVIGRRRELFVLLLLAFIFLCALPTMTYGGVVLVNFLNVYGPGLAILFVVFVEAAGVFWFYGVDRFSSDVEQMLGSKPGLFWRICWTYISPVFLLTIFIFSIMGYKEMLGEEYYYPDWSYQVGWAVTCSSVLCIPMYIIYKFFFASKGGCRQRLQESFQPEDNCGSVVPGQQGTSV.

Positions Met-1–Pro-53 are disordered. Residues Met-1–Glu-82 are Cytoplasmic-facing. Residues Asn-32–Gly-42 show a composition bias toward acidic residues. 3 helical membrane passes run Phe-83–Ile-103, Ala-111–Met-130, and Gly-155–Ile-175. Na(+) contacts are provided by Gly-89, Ala-91, Val-92, and Asn-96. Over Gly-176–Lys-244 the chain is Extracellular. Residues Cys-195 and Cys-204 are joined by a disulfide bond. A glycan (N-linked (GlcNAc...) asparagine) is linked at Asn-211. 5 helical membrane-spanning segments follow: residues Pro-245–Trp-263, Val-272–Val-289, Ile-325–Tyr-342, Leu-354–Leu-375, and Met-408–Leu-427. Na(+) is bound by residues Ser-328, Asn-360, Leu-425, Asp-428, and Ser-429. Transmembrane regions (helical) follow at residues Leu-455–Thr-473, Gly-489–Val-509, Ile-530–Met-549, and Val-568–Tyr-586. Over Lys-587–Val-622 the chain is Cytoplasmic.

The protein belongs to the sodium:neurotransmitter symporter (SNF) (TC 2.A.22) family. Expression is specific to cell bodies in the ventral ganglion of the embryonic and larval nervous system.

Its subcellular location is the cell membrane. Its function is as follows. Terminates the action of serotonin by its high affinity sodium-dependent reuptake into presynaptic terminals. This is Sodium-dependent serotonin transporter (SerT) from Drosophila melanogaster (Fruit fly).